The sequence spans 316 residues: L-lactate dehydrogenase (316 aa).

Position 34-39 (34-39 (DVVEGV)) interacts with NAD(+). Substrate-binding residues include Arg-89, Asn-121, and Arg-152. Asn-121 provides a ligand contact to NAD(+). Catalysis depends on His-172, which acts as the Proton acceptor.

It belongs to the LDH/MDH superfamily. LDH family. As to quaternary structure, homotetramer.

The catalysed reaction is (S)-lactate + NAD(+) = pyruvate + NADH + H(+). It functions in the pathway fermentation; pyruvate fermentation to lactate; (S)-lactate from pyruvate: step 1/1. This is L-lactate dehydrogenase from Botryococcus braunii (Green alga).